A 740-amino-acid chain; its full sequence is Autotransporter adhesin BtaE (740 aa).

An N-terminal signal peptide occupies residues 1 to 11 (MFGLSVNHAYA). Positions 12 to 647 (GPGIFINDGT…LQTLDQANAY (636 aa)) are surface exposed passenger domain. The segment at 648–686 (TDKKFGKLNEDIVATRIEARQAAAIGLAAASLRYDDRPG) is outer membrane translocation of the passenger domain. A run of 4 beta stranded transmembrane segments spans residues 686-696 (GKISAAIGGGF), 700-710 (EGAVALGLGHT), 719-725 (NLSAATS), and 728-739 (NWGMGAGFSYTF). Positions 687-740 (KISAAIGGGFWRGEGAVALGLGHTSEDQRMRSNLSAATSGGNWGMGAGFSYTFN) are translocator domain.

This sequence belongs to the autotransporter-2 (AT-2) (TC 1.B.40) family. Homotrimer.

Its subcellular location is the cell surface. The protein resides in the cell outer membrane. Its function is as follows. Binds to hyaluronic acid and epithelial cells, and is required for full virulence in the mouse model. This Brucella suis biovar 1 (strain 1330) protein is Autotransporter adhesin BtaE.